A 66-amino-acid chain; its full sequence is Alpha-conotoxin GID (66 aa).

The N-terminal stretch at 1-21 is a signal peptide; it reads MGMRMMFTVFLLVVLAATIVS. Residues 22–44 constitute a propeptide that is removed on maturation; sequence FTSDRASDGRNVAAKAFHRIGRT. Residues 45 to 48 are N-terminal tail important for activity on alpha-3-beta-2/CHRNA3-CHRNB2 and alpha-4-beta-2/CHRNA4-CHRNB2 nAChR; the sequence is IRDE. At E48 the chain carries 4-carboxyglutamate. Cystine bridges form between C49/C55 and C50/C63. The ser-Xaa-Pro motif, crucial for potent interaction with nAChR stretch occupies residues 51–53; the sequence is SNP. The residue at position 60 (P60) is a 4-hydroxyproline.

Belongs to the conotoxin A superfamily. In terms of processing, gamma-carboxyglutamation of Glu-48 seems to be not important for nAChR inhibition, since synthetic peptides without this modification do not show change in inhibition of alpha-7/CHRNA7 and alpha-3-beta-2/CHRNA3-CHRNB2 nAChR and show a 2.3-fold increase in inhibition of alpha-4-beta-2/CHRNA4-CHRNB2 nAChR. Post-translationally, hydroxylation of Pro-60 seems to be important for nAChR inhibition, since synthetic peptides without this modification show a small decrease in inhibition of alpha-7/CHRNA7 and alpha-3-beta-2/CHRNA3-CHRNB2 nAChR and a very important decrease in inhibition of alpha-4-beta-2/CHRNA4-CHRNB2 nAChR. An amidation of Cys-63 increases potency against alpha-7/CHRNA7 (2.6-fold) and alpha-3-beta-2/CHRNA3-CHRNB2 (2-fold) nAChR. On the other hand, the peptide has no more activity on alpha-4-beta-2/CHRNA4-CHRNB2 nAChR with an amidated Cys-63. As to expression, expressed by the venom duct.

Its subcellular location is the secreted. Alpha-conotoxins act on postsynaptic membranes, they bind to the nicotinic acetylcholine receptors (nAChR) and thus inhibit them. This toxin reversibly blocks alpha-3-beta-2/CHRNA3-CHRNB2 (IC(50)=3.1-5.1 nM), alpha-7/CHRNA7 (IC(50)=4.5-5.1 nM), and alpha-4-beta-2/CHRNA4-CHRNB2 (IC(50)=128.6-390 nM) nAChRs. This chain is Alpha-conotoxin GID, found in Conus geographus (Geography cone).